The sequence spans 479 residues: Anaerobic nitric oxide reductase flavorubredoxin (479 aa).

Residues 30–210 (LRGSSYNSYL…PFSRLVTPKI (181 aa)) form a zinc metallo-hydrolase region. His79, Glu81, Asp83, His147, Asp166, and His227 together coordinate Fe cation. The 140-residue stretch at 254–393 (ITIFYDTMSN…LCRQHGRDIA (140 aa)) folds into the Flavodoxin-like domain. FMN is bound by residues 260 to 264 (TMSNN) and 342 to 369 (AFGSHGWSGGAVDRLSTRLQDAGFEMSL). The 52-residue stretch at 423–474 (GPKMQCSVCQWIYDPALGEPLQDVAPGTPWSDVPDNFLCPECSLGKDVFDVL) folds into the Rubredoxin-like domain. Residues Cys428, Cys431, Cys461, and Cys464 each coordinate Fe cation.

It in the N-terminal section; belongs to the zinc metallo-hydrolase group 3 family. Homotetramer. The cofactor is Fe cation. FMN serves as cofactor.

It is found in the cytoplasm. It participates in nitrogen metabolism; nitric oxide reduction. Its function is as follows. Anaerobic nitric oxide reductase; uses NADH to detoxify nitric oxide (NO), protecting several 4Fe-4S NO-sensitive enzymes. Has at least 2 reductase partners, only one of which (NorW, flavorubredoxin reductase) has been identified. NO probably binds to the di-iron center; electrons enter from the NorW at rubredoxin and are transferred sequentially to the FMN center and the di-iron center. Also able to function as an aerobic oxygen reductase. This is Anaerobic nitric oxide reductase flavorubredoxin from Salmonella arizonae (strain ATCC BAA-731 / CDC346-86 / RSK2980).